A 296-amino-acid polypeptide reads, in one-letter code: Probable endonuclease 4 (296 aa).

The Zn(2+) site is built by His-68, His-109, Glu-144, Asp-178, His-181, His-213, Asp-226, His-228, and Glu-258.

The protein belongs to the AP endonuclease 2 family. The cofactor is Zn(2+).

The catalysed reaction is Endonucleolytic cleavage to 5'-phosphooligonucleotide end-products.. Endonuclease IV plays a role in DNA repair. It cleaves phosphodiester bonds at apurinic or apyrimidinic (AP) sites, generating a 3'-hydroxyl group and a 5'-terminal sugar phosphate. The polypeptide is Probable endonuclease 4 (Staphylococcus saprophyticus subsp. saprophyticus (strain ATCC 15305 / DSM 20229 / NCIMB 8711 / NCTC 7292 / S-41)).